The chain runs to 188 residues: Peptidyl-prolyl cis-trans isomerase (188 aa).

An N-terminal signal peptide occupies residues 1-20 (MLKRVAIVLGGLLISAHALA). Residues 21 to 181 (NTMVEMKTNL…QPVKIISVQI (161 aa)) enclose the PPIase cyclophilin-type domain.

This sequence belongs to the cyclophilin-type PPIase family.

It is found in the periplasm. It carries out the reaction [protein]-peptidylproline (omega=180) = [protein]-peptidylproline (omega=0). Its function is as follows. PPIases accelerate the folding of proteins. It catalyzes the cis-trans isomerization of proline imidic peptide bonds in oligopeptides. This protein is not essential for growth. Presumably plays a role in signal transduction. The polypeptide is Peptidyl-prolyl cis-trans isomerase (rotA) (Acinetobacter baylyi (strain ATCC 33305 / BD413 / ADP1)).